The chain runs to 102 residues: NADH-quinone oxidoreductase subunit K (102 aa).

The next 3 helical transmembrane spans lie at I4–L24, M30–V50, and V62–L82.

It belongs to the complex I subunit 4L family. In terms of assembly, NDH-1 is composed of 14 different subunits. Subunits NuoA, H, J, K, L, M, N constitute the membrane sector of the complex.

It is found in the cell inner membrane. The catalysed reaction is a quinone + NADH + 5 H(+)(in) = a quinol + NAD(+) + 4 H(+)(out). Its function is as follows. NDH-1 shuttles electrons from NADH, via FMN and iron-sulfur (Fe-S) centers, to quinones in the respiratory chain. The immediate electron acceptor for the enzyme in this species is believed to be ubiquinone. Couples the redox reaction to proton translocation (for every two electrons transferred, four hydrogen ions are translocated across the cytoplasmic membrane), and thus conserves the redox energy in a proton gradient. The sequence is that of NADH-quinone oxidoreductase subunit K from Chromohalobacter salexigens (strain ATCC BAA-138 / DSM 3043 / CIP 106854 / NCIMB 13768 / 1H11).